Here is a 110-residue protein sequence, read N- to C-terminus: MHLKASSILALLVIGANAYPASANSAAALVPEPQQPEAPAVAGSTVGAQVDIHHPRLEARYGRDEPQIMCGYCGKRFWNKPDLEKHIKLKPSKGGHKGQPYKEHSWNRPT.

Positions 1 to 18 (MHLKASSILALLVIGANA) are cleaved as a signal peptide. Residues 68–96 (IMCGYCGKRFWNKPDLEKHIKLKPSKGGH) form a C2H2-type zinc finger. Positions 88-110 (KLKPSKGGHKGQPYKEHSWNRPT) are disordered. Basic and acidic residues predominate over residues 100-110 (PYKEHSWNRPT).

It localises to the secreted. Its subcellular location is the host nucleus. In terms of biological role, secreted effector that translocates into the nuclei of host cells to reprogram the expression of immunity-associated genes by binding to effector binding elements (EBEs) in rice. Binds the 5'-CCACCTCC-3' EBE of promoters from targeted rice genes and probably recruits a yet to be determined host repressor. Causes ambivalent immunity with increased susceptibility to the hemibiotrophic pathogens Magnaporthe oryzae and Xanthomonas oryzae pv. oryzae, but enhances resistance to Cochliobolus miyabeanus, a necrotrophic pathogen. The chain is Host transcription reprogramming factor 2 from Pyricularia oryzae (strain 70-15 / ATCC MYA-4617 / FGSC 8958) (Rice blast fungus).